We begin with the raw amino-acid sequence, 147 residues long: Phosphoribosyl-AMP cyclohydrolase (147 aa).

Aspartate 89 provides a ligand contact to Mg(2+). A Zn(2+)-binding site is contributed by cysteine 90. Mg(2+)-binding residues include aspartate 91 and aspartate 93. Positions 106 and 113 each coordinate Zn(2+).

This sequence belongs to the PRA-CH family. As to quaternary structure, homodimer. Requires Mg(2+) as cofactor. Zn(2+) is required as a cofactor.

It localises to the cytoplasm. It carries out the reaction 1-(5-phospho-beta-D-ribosyl)-5'-AMP + H2O = 1-(5-phospho-beta-D-ribosyl)-5-[(5-phospho-beta-D-ribosylamino)methylideneamino]imidazole-4-carboxamide. Its pathway is amino-acid biosynthesis; L-histidine biosynthesis; L-histidine from 5-phospho-alpha-D-ribose 1-diphosphate: step 3/9. Its function is as follows. Catalyzes the hydrolysis of the adenine ring of phosphoribosyl-AMP. The protein is Phosphoribosyl-AMP cyclohydrolase of Nitrobacter hamburgensis (strain DSM 10229 / NCIMB 13809 / X14).